A 918-amino-acid polypeptide reads, in one-letter code: Alpha-scruin (918 aa).

Kelch repeat units lie at residues 82–133, 134–187, 188–235, 237–289, 291–341, and 342–390; these read VVLA…YFHR, RVYV…VMDE, RIFV…NNEG, IYVI…TQNK, IWIW…KTGA, and HVFI…AIPA. A disordered region spans residues 398 to 427; sequence EVPTSTPSSKAKPQPGSKPTSVKYKKQPDI. The region spanning 430-459 is the IQ domain; sequence RNEAAKKVQRRWRRYIEQKSITKRMQQGDS. Kelch repeat units lie at residues 590–641, 642–695, 696–743, 745–795, 797–849, and 851–898; these read VIIG…YYRS, AIYI…VFND, VLYA…AHGG, IWLL…VCDN, IWLC…ALES, and LYIA…TIPP.

Sperm.

In terms of biological role, actin bundling protein found in the acrosomal sperm process. The sequence is that of Alpha-scruin from Limulus polyphemus (Atlantic horseshoe crab).